Reading from the N-terminus, the 667-residue chain is Serine/threonine-protein kinase BUR1 (667 aa).

Residues 60-378 enclose the Protein kinase domain; the sequence is YKEEEKLGQG…AMSAMKHPFF (319 aa). Residues 66 to 74 and Lys89 each bind ATP; that span reads LGQGTFGEV. The Proton acceptor role is filled by Asp207. A disordered region spans residues 408–667; it reads HEAMSQKGPS…SEQKDIADLY (260 aa). Residues 432–443 show a composition bias toward basic and acidic residues; sequence KFEKKSGIKREQ. Residues 494-516 are compositionally biased toward polar residues; sequence NNHSGSLRNRITPSNMGTHSNPR. A compositionally biased stretch (low complexity) spans 541-556; it reads YNRGYSSSVNSRYNNR. Polar residues-rich tracts occupy residues 582 to 594, 602 to 611, and 622 to 632; these read DNNQ…QGHS, SKYNSTQTNI, and NEYNASKLGSQ. Positions 633 to 667 are enriched in basic and acidic residues; sequence DTKKNDYPKHSETQKQQNNEEKKIHSEQKDIADLY.

The protein belongs to the protein kinase superfamily. CMGC Ser/Thr protein kinase family. CDC2/CDKX subfamily.

It is found in the nucleus. It catalyses the reaction L-seryl-[protein] + ATP = O-phospho-L-seryl-[protein] + ADP + H(+). The catalysed reaction is L-threonyl-[protein] + ATP = O-phospho-L-threonyl-[protein] + ADP + H(+). The enzyme catalyses [DNA-directed RNA polymerase] + ATP = phospho-[DNA-directed RNA polymerase] + ADP + H(+). Serine/threonine-protein kinase involved in transcription regulation. Phosphorylates the UBC2/RAD6 ubiquitin-conjugating enzyme (E2), leading to monoubiquitination of histone H2B and the silencing of telomeric-associated genes. Also required for histone H3 methylation. Necessary for the recovery from pheromone-induced growth arrest in the cell cycle G1 phase. The sequence is that of Serine/threonine-protein kinase BUR1 (BUR1) from Candida glabrata (strain ATCC 2001 / BCRC 20586 / JCM 3761 / NBRC 0622 / NRRL Y-65 / CBS 138) (Yeast).